The sequence spans 173 residues: MSLQQLTHDEIDHLSMIELGVKILKEENKAMNYKVIFNKIAELKDFTDEQKQNMMAQFYTDMNVDGRFLTLGSGMWGLKRWYPVEQAEEEITEEPKKKTKKKKKKAEVIDDVDDDLDVTDDEIDDIVSDLGDDLDDDDFEDDLDEDLEDLEDEVDELEADEDVEDENDDDNTR.

Residues 14 to 81 (LSMIELGVKI…GSGMWGLKRW (68 aa)) form the HTH HARE-type domain. A disordered region spans residues 86 to 173 (QAEEEITEEP…EDENDDDNTR (88 aa)). Residues 109 to 173 (IDDVDDDLDV…EDENDDDNTR (65 aa)) show a composition bias toward acidic residues.

Belongs to the RpoE family. RNAP is composed of a core of 2 alpha, a beta and a beta' subunits. The core is associated with a delta subunit and one of several sigma factors.

Participates in both the initiation and recycling phases of transcription. In the presence of the delta subunit, RNAP displays an increased specificity of transcription, a decreased affinity for nucleic acids, and an increased efficiency of RNA synthesis because of enhanced recycling. This Oceanobacillus iheyensis (strain DSM 14371 / CIP 107618 / JCM 11309 / KCTC 3954 / HTE831) protein is Probable DNA-directed RNA polymerase subunit delta.